Here is a 90-residue protein sequence, read N- to C-terminus: MPQLPGETVSFKLERDDENKVRAILHTVYQALQEKGYNPINQLVGYMISGEPAYITSHSEARNLICKVDRDEIMEVLLKSYLQNSMGKGE.

The protein belongs to the UPF0297 family.

In Syntrophomonas wolfei subsp. wolfei (strain DSM 2245B / Goettingen), this protein is UPF0297 protein Swol_0469.